Consider the following 2176-residue polypeptide: MEPTDSTNEQLGDTKTAAVKEESRSFLGIDLNEIPTGATLGGGCTAGQDDDGEYEPVEVVRSIHDNPDPAPGAPAEVPEPDRDASCGACGRPESIELVVVCDACERGFHMSCVNDGVEAAPSADWMCSDCRTGGERSKLWPLGVKSKLILDMNASPPSDAEGYGAEETSDSRKHMLASSSCIGNSFDYAMMHSSFSSLGRGHASLEASGLMSRNTKMSMDALGSHNLGFGFPLNLNNSSLPMRFPSLDPSELFLQNLRHFISERHGVLEDGWRVEFRQPLNGYQLCAVYCAPNGKTFSSIQEVACYLGLAINGNYSCMDAEIRNENSLLQERLHTPKRRKTSRWPNNGFPEQKGSSVSAQLRRFPFNGQTMSPFAVKSGTHFQAGGSLSSGNNGCGCEEAKNGCPMQFEDFFVLSLGRIDIRQSYHNVNVIYPIGYKSCWHDKITGSLFTCEVSDGNSGPIFKVTRSPCSKSFIPAGSTVFSCPKIDEMVEQNSDKLSNRRDSTQERDDDASVEILLSEHCPPLGDDILSCLREKSFSKTVNSLRSEVDSSRVDFDKNLSYDQDHGVEIGDIVVEEDSLSDAWKKVSQKLVDACSIVLKQKGTLNFLCKHVDRETSEINWDTMNEKDNVILSLSKFCCSLAPCSVTCGEKDKSEFAAVVDALSRWLDQNRFGLDADFVQEMIEHMPGAESCTNYRTLKSRSSSSVPITVAEGALVVKPKGGENVKDEVFGEISRKAKKPKLNGGHGVRNLHPPPGRPMCLRLPPGLVGDFLQVSEVFWRFHEILGFEEAFSPENLEQELINPVFDGLFLDKPGKDDKRSEINFTDKDSTATKLFSLFDESRQPFPAKNTSASELKEKKAGDSSDFKISDSSRGSCVGALLTRAHISLLQVLICELQSKVAAFVDPNFDSGESRSRRGRKKDDSTLSAKRNKLHMLPVNEFTWPELARRYILSLLSMDGNLESAEIAARESGKVFRCLQGDGGLLCGSLTGVAGMEADSMLLAEAIKKISGSLTSENDVLSVEDDDSDGLDATETNTCSGDIPEWAQVLEPVKKLPTNVGTRIRKCVYEALERNPPEWAKKILEHSISKEIYKGNASGPTKKAVLSLLADIRGGDLVQRSIKGTKKRTYISVSDVIMKKCRAVLRGVAAADEDKVLCTLLGRKLLNSSDNDDDGLLGSPAMVSRPLDFRTIDLRLAAGAYDGSTEAFLEDVLELWSSIRVMYADQPDCVDLVATLSEKFKSLYEAEVVPLVQKLKDYRKLECLSAEMKKEIKDIVVSVNKLPKAPWDEGVCKVCGVDKDDDSVLLCDTCDAEYHTYCLNPPLIRIPDGNWYCPSCVIAKRMAQEALESYKLVRRRKGRKYQGELTRASMELTAHLADVMEEKDYWEFSAEERILLLKLLCDELLSSSLVHQHLEQCAEAIIEMQQKLRSLSSEWKNAKMRQEFLTAKLAKVEPSILKEVGEPHNSSYFADQMGCDPQPQEGVGDGVTRDDETSSTAYLNKNQGKSPLETDTQPGESHVNFGESKISSPETISSPGRHELPIADTSPLVTDNLPEKDTSETLLKSVGRNHETHSPNSNAVELPTAHDASSQASQELQACQQDLSATSNEIQNLQQSIRSIESQLLKQSIRRDFLGTDASGRLYWGCCFPDENPRILVDGSISLQKPVQADLIGSKVPSPFLHTVDHGRLRLSPWTYYETETEISELVQWLHDDDLKERDLRESILWWKRLRYGDVQKEKKQAQNLSAPVFATGLETKAAMSMEKRYGPCIKLEMETLKKRGKKTKVAEREKLCRCECLESILPSMIHCLICHKTFASDDEFEDHTESKCIPYSLATEEGKDISDSSKAKESLKSDYLNVKSSAGKDVAEISNVSELDSGLIRYQEEESISPYHFEEICSKFVTKDCNRDLVKEIGLISSNGIPTFLPSSSTHLNDSVLISAKSNKPDGGDSGDQVIFAGPETNVEGLNSESNMSFDRSVTDSHGGPLDKPSGLGFGFSEQKNKKSSGSGLKSCCVVPQAALKRVTGKALPGFRFLKTNLLDMDVALPEEALRPSKSHPNRRRAWRVFVKSSQSIYELVQATIVVEDMIKTEYLKNEWWYWSSLSAAAKISTLSALSVRIFSLDAAIIYDKPITPSNPIDETKPIISLPDQKSQPVSDSQERSSRVRRSGKKRKEPEGS.

Residues 1-13 (MEPTDSTNEQLGD) show a composition bias toward polar residues. 2 disordered regions span residues 1–20 (MEPT…AAVK) and 28–85 (GIDL…RDAS). The PHD-type 1 zinc-finger motif lies at 83 to 133 (DASCGACGRPESIELVVVCDACERGFHMSCVNDGVEAAPSADWMCSDCRTG). An RING-type 1; degenerate zinc finger spans residues 86-131 (CGACGRPESIELVVVCDACERGFHMSCVNDGVEAAPSADWMCSDCR). Positions 258 to 327 (RHFISERHGV…MDAEIRNENS (70 aa)) constitute an MBD domain. Residues 403–456 (GCPMQFEDFFVLSLGRIDIRQSYHNVNVIYPIGYKSCWHDKITGSLFTCEVSDG) form the FYR N-terminal domain. A coiled-coil region spans residues 491 to 511 (EQNSDKLSNRRDSTQERDDDA). One can recognise an FYR C-terminal domain in the interval 550–698 (SSRVDFDKNL…ESCTNYRTLK (149 aa)). 3 short sequence motifs (nuclear localization signal) span residues 914–921 (SRRGRKKD), 1124–1131 (KKRTYISV), and 1256–1263 (YRKLECLS). Residues 1098–1137 (PTKKAVLSLLADIRGGDLVQRSIKGTKKRTYISVSDVIMK) form a Pumilio repeat. In terms of domain architecture, Bromo spans 1130–1245 (SVSDVIMKKC…EKFKSLYEAE (116 aa)). A coiled-coil region spans residues 1251–1273 (QKLKDYRKLECLSAEMKKEIKDI). The segment at 1287-1337 (EGVCKVCGVDKDDDSVLLCDTCDAEYHTYCLNPPLIRIPDGNWYCPSCVIA) adopts a PHD-type 2 zinc-finger fold. An RING-type 2; degenerate zinc finger spans residues 1290 to 1335 (CKVCGVDKDDDSVLLCDTCDAEYHTYCLNPPLIRIPDGNWYCPSCV). Positions 1337-1344 (AKRMAQEA) match the Nuclear localization signal motif. Residues 1410–1437 (QHLEQCAEAIIEMQQKLRSLSSEWKNAK) adopt a coiled-coil conformation. Disordered stretches follow at residues 1472 to 1553 (GCDP…NLPE) and 1565 to 1595 (GRNH…QELQ). 3 stretches are compositionally biased toward polar residues: residues 1492–1513 (SSTA…TQPG), 1523–1532 (KISSPETISS), and 1585–1595 (DASSQASQELQ). Residues 1588–1628 (SQASQELQACQQDLSATSNEIQNLQQSIRSIESQLLKQSIR) are a coiled coil. A Nuclear localization signal motif is present at residues 1761–1768 (EKRYGPCI). Positions 2136 to 2176 (IDETKPIISLPDQKSQPVSDSQERSSRVRRSGKKRKEPEGS) are disordered.

Interacts with histone H4. Expressed in leaves, buds, flowers and stems.

It localises to the nucleus. It carries out the reaction L-lysyl-[protein] + acetyl-CoA = N(6)-acetyl-L-lysyl-[protein] + CoA + H(+). Probable transcriptional regulator that acts as a histone acetyltransferase. Mediates the acetylation of histone H3 and H4 of target loci (e.g. FLC). Involved in an auxin-independent regulation of shoot branching and flowering time. The sequence is that of Methyl-CpG-binding domain-containing protein 9 (MBD9) from Arabidopsis thaliana (Mouse-ear cress).